We begin with the raw amino-acid sequence, 184 residues long: Lactoylglutathione lyase (184 aa).

At A2 the chain carries N-acetylalanine. A disulfide bridge links C19 with C20. The region spanning L31 to P177 is the VOC domain. Q34 and R38 together coordinate substrate. Q34 provides a ligand contact to Zn(2+). E100 is a Zn(2+) binding site. N104 lines the substrate pocket. T107 is subject to Phosphothreonine. Substrate-binding residues include R123 and H127. Position 127 (H127) interacts with Zn(2+). S-glutathionyl cysteine is present on C139. Residue K148 is modified to N6-acetyllysine; alternate. The residue at position 148 (K148) is an N6-succinyllysine; alternate. Residue K157–M158 participates in substrate binding. Residue E173 participates in Zn(2+) binding. Catalysis depends on E173, which acts as the Proton donor/acceptor.

It belongs to the glyoxalase I family. In terms of assembly, homodimer. Zn(2+) serves as cofactor. Post-translationally, glutathionylation at Cys-139 inhibits enzyme activity. In terms of processing, phosphorylated at Thr-107 in the presence of CaMK2. However, this is a consensus site for phosphorylation by CK2 so phosphorylation may be mediated by CK2 rather than CaMK2. Phosphorylation is induced by TNF and suppresses the TNF-induced transcriptional activity of NF-kappa-B. Exists in a nitric oxide (NO)-modified form. The exact nature of the modification is unknown, but it suppresses the TNF-induced transcriptional activity of NF-kappa-B.

It catalyses the reaction (R)-S-lactoylglutathione = methylglyoxal + glutathione. The protein operates within secondary metabolite metabolism; methylglyoxal degradation; (R)-lactate from methylglyoxal: step 1/2. Catalyzes the conversion of hemimercaptal, formed from methylglyoxal and glutathione, to S-lactoylglutathione. Involved in the regulation of TNF-induced transcriptional activity of NF-kappa-B. Required for normal osteoclastogenesis. The protein is Lactoylglutathione lyase (Glo1) of Rattus norvegicus (Rat).